A 1150-amino-acid chain; its full sequence is ATP-dependent helicase/deoxyribonuclease subunit B (1150 aa).

G8–S15 is a binding site for ATP. The [4Fe-4S] cluster site is built by C786, C1106, C1109, and C1115.

Belongs to the helicase family. AddB/RexB type 1 subfamily. Heterodimer of AddA and AddB. It depends on Mg(2+) as a cofactor. [4Fe-4S] cluster is required as a cofactor.

The heterodimer acts as both an ATP-dependent DNA helicase and an ATP-dependent, dual-direction single-stranded exonuclease. Recognizes the chi site generating a DNA molecule suitable for the initiation of homologous recombination. The AddB subunit has 5' -&gt; 3' nuclease activity but not helicase activity. This Clostridium botulinum (strain Okra / Type B1) protein is ATP-dependent helicase/deoxyribonuclease subunit B.